A 269-amino-acid chain; its full sequence is Ribosomal RNA small subunit methyltransferase J (269 aa).

S-adenosyl-L-methionine contacts are provided by residues 125 to 126 (ER) and D179.

The protein belongs to the methyltransferase superfamily. RsmJ family.

It is found in the cytoplasm. The enzyme catalyses guanosine(1516) in 16S rRNA + S-adenosyl-L-methionine = N(2)-methylguanosine(1516) in 16S rRNA + S-adenosyl-L-homocysteine + H(+). In terms of biological role, specifically methylates the guanosine in position 1516 of 16S rRNA. This Pseudomonas syringae pv. syringae (strain B728a) protein is Ribosomal RNA small subunit methyltransferase J.